A 755-amino-acid polypeptide reads, in one-letter code: Tryptophan 2-monooxygenase (755 aa).

The FMN site is built by serine 247, glutamate 267, lysine 275, and arginine 295. Residue arginine 295 coordinates substrate.

Belongs to the tryptophan 2-monooxygenase family. Requires FMN as cofactor.

The enzyme catalyses L-tryptophan + O2 = indole-3-acetamide + CO2 + H2O. It participates in plant hormone metabolism; auxin biosynthesis. This is Tryptophan 2-monooxygenase (tms1) from Agrobacterium tumefaciens (strain Ach5).